Here is a 185-residue protein sequence, read N- to C-terminus: dCTP deaminase (185 aa).

DCTP contacts are provided by residues 107 to 112 (KSTYAR), 131 to 133 (TLE), Gln152, Tyr166, and Gln176. Glu133 functions as the Proton donor/acceptor in the catalytic mechanism.

The protein belongs to the dCTP deaminase family. In terms of assembly, homotrimer.

The catalysed reaction is dCTP + H2O + H(+) = dUTP + NH4(+). The protein operates within pyrimidine metabolism; dUMP biosynthesis; dUMP from dCTP (dUTP route): step 1/2. Functionally, catalyzes the deamination of dCTP to dUTP. In Neorickettsia sennetsu (strain ATCC VR-367 / Miyayama) (Ehrlichia sennetsu), this protein is dCTP deaminase.